We begin with the raw amino-acid sequence, 78 residues long: Defensin-like protein 74 (78 aa).

A signal peptide spans 1-28 (MNYKIGIMSLLVITSIIFLFLVPDKVEA). 4 disulfides stabilise this stretch: C32/C73, C36/C58, C42/C71, and C46/C72.

The protein belongs to the DEFL family.

It is found in the secreted. This is Defensin-like protein 74 (LCR43) from Arabidopsis thaliana (Mouse-ear cress).